A 394-amino-acid chain; its full sequence is Alpha-2B adrenergic receptor (394 aa).

The chain crosses the membrane as a helical span at residues Ala-1–Leu-25. At Thr-26–Leu-36 the chain is on the cytoplasmic side. A helical transmembrane segment spans residues Phe-37 to Leu-62. Topologically, residues Gly-63–Cys-72 are extracellular. A disulfide bond links Cys-72 and Cys-151. Residues Glu-73–Leu-95 traverse the membrane as a helical segment. The Cytoplasmic segment spans residues Asp-96–Lys-117. A helical transmembrane segment spans residues Cys-118–Asp-140. Over Gln-141–Glu-156 the chain is Extracellular. The helical transmembrane segment at Ala-157–Leu-180 threads the bilayer. Residues Arg-181–Val-358 lie on the Cytoplasmic side of the membrane. Residues Arg-191–Gly-318 form a disordered region. Positions Leu-281–Pro-298 are enriched in acidic residues. The segment covering Gln-299–Pro-312 has biased composition (low complexity). The chain crosses the membrane as a helical span at residues Leu-359–Ile-382. Residues Cys-383–His-391 lie on the Extracellular side of the membrane. Residues Gly-392–Phe-394 traverse the membrane as a helical segment.

Belongs to the G-protein coupled receptor 1 family. Adrenergic receptor subfamily. ADRA2B sub-subfamily. As to quaternary structure, interacts with RAB26. Interacts with PPP1R9B. Interacts with GGA1, GGA2 and GGA3.

It is found in the cell membrane. Its function is as follows. Alpha-2 adrenergic receptors mediate the catecholamine-induced inhibition of adenylate cyclase through the action of G proteins. The protein is Alpha-2B adrenergic receptor (ADRA2B) of Oryctolagus cuniculus (Rabbit).